A 360-amino-acid chain; its full sequence is Membrane-bound lytic murein transglycosylase C (360 aa).

A signal peptide spans 1-16 (MKKYLALALIAPLLVS). Cys17 carries the N-palmitoyl cysteine lipid modification. Cys17 carries S-diacylglycerol cysteine lipidation.

Belongs to the transglycosylase Slt family.

Its subcellular location is the cell outer membrane. The catalysed reaction is Exolytic cleavage of the (1-&gt;4)-beta-glycosidic linkage between N-acetylmuramic acid (MurNAc) and N-acetylglucosamine (GlcNAc) residues in peptidoglycan, from either the reducing or the non-reducing ends of the peptidoglycan chains, with concomitant formation of a 1,6-anhydrobond in the MurNAc residue.. Functionally, murein-degrading enzyme. May play a role in recycling of muropeptides during cell elongation and/or cell division. This is Membrane-bound lytic murein transglycosylase C from Klebsiella pneumoniae subsp. pneumoniae (strain ATCC 700721 / MGH 78578).